Here is an 82-residue protein sequence, read N- to C-terminus: Small ribosomal subunit protein uS17 (82 aa).

Belongs to the universal ribosomal protein uS17 family. As to quaternary structure, part of the 30S ribosomal subunit.

In terms of biological role, one of the primary rRNA binding proteins, it binds specifically to the 5'-end of 16S ribosomal RNA. In Bradyrhizobium diazoefficiens (strain JCM 10833 / BCRC 13528 / IAM 13628 / NBRC 14792 / USDA 110), this protein is Small ribosomal subunit protein uS17.